The sequence spans 256 residues: DNA polymerase sliding clamp 2 (256 aa).

Belongs to the PCNA family. As to quaternary structure, homotrimer. The subunits circularize to form a toroid; DNA passes through its center. Replication factor C (RFC) is required to load the toroid on the DNA.

Its function is as follows. Sliding clamp subunit that acts as a moving platform for DNA processing. Responsible for tethering the catalytic subunit of DNA polymerase and other proteins to DNA during high-speed replication. The sequence is that of DNA polymerase sliding clamp 2 from Pyrobaculum aerophilum (strain ATCC 51768 / DSM 7523 / JCM 9630 / CIP 104966 / NBRC 100827 / IM2).